Here is a 355-residue protein sequence, read N- to C-terminus: Putative arylamide transporter (355 aa).

6 helical membrane-spanning segments follow: residues 22–42 (TVLW…YLTH), 44–64 (VFNH…MSAT), 71–91 (RAQQ…GVHA), 92–112 (LLGS…SVAV), 119–139 (VAQG…VLVF), and 150–170 (LFDA…LFPP).

The protein localises to the cell membrane. In terms of biological role, may be involved in the import of arylamide compounds. The chain is Putative arylamide transporter from Mycobacterium bovis (strain ATCC BAA-935 / AF2122/97).